A 730-amino-acid polypeptide reads, in one-letter code: Propionyl-CoA carboxylase alpha chain, mitochondrial (730 aa).

Residues 1–52 (MAGLWVGGSVLVAAGRRGSRSPRPLMRSVALWTLKHVPQYSRQRLLVSRSLC) constitute a mitochondrion transit peptide. Positions 62–509 (TFDKILIANR…NTKFLSDVYP (448 aa)) constitute a Biotin carboxylation domain. Lys65 carries the post-translational modification N6-acetyllysine; alternate. The residue at position 65 (Lys65) is an N6-succinyllysine; alternate. N6-succinyllysine is present on Lys119. Position 150 is an N6-acetyllysine; alternate (Lys150). N6-succinyllysine; alternate is present on Lys150. Lys154 carries the N6-acetyllysine modification. Lys177 provides a ligand contact to ATP. An ATP-grasp domain is found at 181–378 (KLLAKKAKVN…LVQEMIRVAK (198 aa)). At Lys188 the chain carries N6-succinyllysine. N6-acetyllysine; alternate is present on Lys200. The residue at position 200 (Lys200) is an N6-succinyllysine; alternate. ATP contacts are provided by residues 209 to 270 (AREI…PRHI), Glu261, and Asn296. The residue at position 252 (Ser252) is a Phosphoserine. Lys262 bears the N6-succinyllysine mark. Mg(2+) is bound by residues Glu336, Glu349, and Asn351. Mn(2+)-binding residues include Glu336, Glu349, and Asn351. Residue Glu349 is part of the active site. An N6-succinyllysine modification is found at Lys407. Phe409 serves as a coordination point for biotin. N6-succinyllysine is present on residues Lys502, Lys513, and Lys650. The Biotinyl-binding domain maps to 655-730 (KAAEDTSSIL…GEGDLLVELE (76 aa)). Position 696 is an N6-biotinyllysine (Lys696).

In terms of assembly, the holoenzyme is a dodecamer composed of 6 PCCA/alpha subunits and 6 PCCB/beta subunits. Interacts (via the biotin carboxylation domain) with SIRT4. Interacts with SIRT3 and SIRT5. It depends on Mg(2+) as a cofactor. Mn(2+) is required as a cofactor. Requires biotin as cofactor. Acetylated. Post-translationally, the biotin cofactor is covalently attached to the C-terminal biotinyl-binding domain and is required for the catalytic activity. Biotinylation is catalyzed by HLCS.

It is found in the mitochondrion matrix. The catalysed reaction is propanoyl-CoA + hydrogencarbonate + ATP = (S)-methylmalonyl-CoA + ADP + phosphate + H(+). It carries out the reaction butanoyl-CoA + hydrogencarbonate + ATP = (2S)-ethylmalonyl-CoA + ADP + phosphate + H(+). It functions in the pathway metabolic intermediate metabolism; propanoyl-CoA degradation; succinyl-CoA from propanoyl-CoA: step 1/3. In terms of biological role, this is one of the 2 subunits of the biotin-dependent propionyl-CoA carboxylase (PCC), a mitochondrial enzyme involved in the catabolism of odd chain fatty acids, branched-chain amino acids isoleucine, threonine, methionine, and valine and other metabolites. Propionyl-CoA carboxylase catalyzes the carboxylation of propionyl-CoA/propanoyl-CoA to D-methylmalonyl-CoA/(S)-methylmalonyl-CoA. Within the holoenzyme, the alpha subunit catalyzes the ATP-dependent carboxylation of the biotin carried by the biotin carboxyl carrier (BCC) domain, while the beta subunit then tranfers the carboxyl group from carboxylated biotin to propionyl-CoA. Propionyl-CoA carboxylase also significantly acts on butyryl-CoA/butanoyl-CoA, which is converted to ethylmalonyl-CoA/(2S)-ethylmalonyl-CoA at a much lower rate. Other alternative minor substrates include (2E)-butenoyl-CoA/crotonoyl-CoA. The polypeptide is Propionyl-CoA carboxylase alpha chain, mitochondrial (Sus scrofa (Pig)).